Here is a 178-residue protein sequence, read N- to C-terminus: Deoxycytidylate deaminase (178 aa).

The CMP/dCMP-type deaminase domain maps to 14-145 (EWPEYFMAVA…DEATAARLLF (132 aa)). Histidine 84 lines the Zn(2+) pocket. The active-site Proton donor is glutamate 86. Cysteine 110 and cysteine 113 together coordinate Zn(2+). At serine 174 the chain carries Phosphoserine.

It belongs to the cytidine and deoxycytidylate deaminase family. In terms of assembly, homohexamer. The cofactor is Zn(2+).

It catalyses the reaction dCMP + H2O + H(+) = dUMP + NH4(+). The catalysed reaction is 5-hydroxymethyl-dCMP + H2O + H(+) = 5-hydroxymethyl-dUMP + NH4(+). With respect to regulation, allosteric enzyme whose activity is greatly influenced by the end products of its metabolic pathway, dCTP and dTTP. Catalyzes the deamination of dCMP to dUMP, providing the nucleoside monophosphate substrate for the thymidylate synthase/TYMS. Also, part of a nucleotide salvage pathway that eliminates epigenetically modified 5-hydroxymethyl-dCMP (hmdCMP) in a two-step process entailing deamination to cytotoxic 5-hydroxymethyl-dUMP (hmdUMP), followed by its hydrolysis into 5-hydroxymethyluracil (hmU) and 2-deoxy-D-ribose 5-phosphate (deoxyribosephosphate). Catalyzes the first step in that pathway, the deamination of 5-hydroxymethyl-dCMP (hmdCMP). The sequence is that of Deoxycytidylate deaminase from Homo sapiens (Human).